Reading from the N-terminus, the 404-residue chain is Cysteine desulfurase IscS (404 aa).

Pyridoxal 5'-phosphate contacts are provided by residues 75 to 76 (AT), asparagine 155, glutamine 183, and 203 to 205 (SGH). N6-(pyridoxal phosphate)lysine is present on lysine 206. Residue threonine 243 participates in pyridoxal 5'-phosphate binding. Cysteine 328 (cysteine persulfide intermediate) is an active-site residue. [2Fe-2S] cluster is bound at residue cysteine 328.

Belongs to the class-V pyridoxal-phosphate-dependent aminotransferase family. NifS/IscS subfamily. In terms of assembly, homodimer. Forms a heterotetramer with IscU, interacts with other sulfur acceptors. Requires pyridoxal 5'-phosphate as cofactor.

It is found in the cytoplasm. The catalysed reaction is (sulfur carrier)-H + L-cysteine = (sulfur carrier)-SH + L-alanine. It functions in the pathway cofactor biosynthesis; iron-sulfur cluster biosynthesis. Master enzyme that delivers sulfur to a number of partners involved in Fe-S cluster assembly, tRNA modification or cofactor biosynthesis. Catalyzes the removal of elemental sulfur atoms from cysteine to produce alanine. Functions as a sulfur delivery protein for Fe-S cluster synthesis onto IscU, an Fe-S scaffold assembly protein, as well as other S acceptor proteins. This is Cysteine desulfurase IscS from Pectobacterium atrosepticum (strain SCRI 1043 / ATCC BAA-672) (Erwinia carotovora subsp. atroseptica).